Consider the following 500-residue polypeptide: Protein shisa-6 (500 aa).

A signal peptide spans M1–G25. The Extracellular portion of the chain corresponds to A26 to T174. N32 and N59 each carry an N-linked (GlcNAc...) asparagine glycan. Residues A52 to R73 form a disordered region. Residues N175–A195 traverse the membrane as a helical segment. The Cytoplasmic portion of the chain corresponds to K196–V500. Residues T240–H255 are compositionally biased toward polar residues. Disordered stretches follow at residues T240 to P269 and S349 to L378. S391, S397, and S409 each carry phosphoserine. T433 is subject to Phosphothreonine. Residues M444 to F470 form a disordered region. A compositionally biased stretch (polar residues) spans P448–A464. T477 carries the phosphothreonine modification. The PDZ-binding signature appears at E497–V500.

It belongs to the shisa family. In terms of assembly, component of the postsynaptic hippocampal AMPA-type glutamate receptor (AMPAR) complex, at least composed of pore forming AMPAR subunits GRIA1, GRIA2 and GRIA3 and AMPAR auxiliary proteins SHISA6 and SHISA7. Interacts (via PDZ-binding motif) with DLG4/PSD-95 (via PDZ domain); the interaction is direct. As to expression, expressed in the developing ventral mesencephalon.

It is found in the membrane. The protein localises to the postsynaptic density. Involved in maintenance of high-frequency synaptic transmission at hippocampal CA3-CA1 synapses. Regulates AMPA-type glutamate receptor (AMPAR) immobilization at postsynaptic density keeping the channels in an activated state in the presence of glutamate and preventing synaptic depression. May play a role in self-renewal and differentiation of spermatogonial stem cells by inhibiting canonical Wnt signaling pathway. This chain is Protein shisa-6, found in Homo sapiens (Human).